The chain runs to 192 residues: CASP-like protein 1E1 (192 aa).

Residues 1-22 are disordered; that stretch reads MDSQNKNSVDAMDGIESRGMKE. Residues 1–29 lie on the Cytoplasmic side of the membrane; the sequence is MDSQNKNSVDAMDGIESRGMKERGGRTNS. A helical membrane pass occupies residues 30-50; that stretch reads FLVLRVLAFVLTSTAAIVHGV. Topologically, residues 51 to 81 are extracellular; it reads NNQTETVPIQLTSSMPPLYVPVVAKWHYLSA. A glycan (N-linked (GlcNAc...) asparagine) is linked at asparagine 52. The helical transmembrane segment at 82–102 threads the bilayer; the sequence is FVFFVVSNAIACSYAAISVML. At 103–118 the chain is on the cytoplasmic side; it reads SFCGKKSMVPIILTLD. The chain crosses the membrane as a helical span at residues 119-139; it reads LLMVALLFSSNGAATAIGVMG. Residues 140–161 lie on the Extracellular side of the membrane; it reads YKGNSHVKWNKVCNVFGKFCNQ. The chain crosses the membrane as a helical span at residues 162-182; that stretch reads VAASVVLSLIGSIVFVLLVML. Residues 183–192 lie on the Cytoplasmic side of the membrane; the sequence is TAFRLHNKSK.

This sequence belongs to the Casparian strip membrane proteins (CASP) family. Homodimer and heterodimers.

The protein resides in the cell membrane. The polypeptide is CASP-like protein 1E1 (Ricinus communis (Castor bean)).